Reading from the N-terminus, the 503-residue chain is Glutamyl-tRNA(Gln) amidotransferase subunit A (503 aa).

Active-site charge relay system residues include K79 and S154. The Acyl-ester intermediate role is filled by S178.

It belongs to the amidase family. GatA subfamily. In terms of assembly, heterotrimer of A, B and C subunits.

The catalysed reaction is L-glutamyl-tRNA(Gln) + L-glutamine + ATP + H2O = L-glutaminyl-tRNA(Gln) + L-glutamate + ADP + phosphate + H(+). Functionally, allows the formation of correctly charged Gln-tRNA(Gln) through the transamidation of misacylated Glu-tRNA(Gln) in organisms which lack glutaminyl-tRNA synthetase. The reaction takes place in the presence of glutamine and ATP through an activated gamma-phospho-Glu-tRNA(Gln). This is Glutamyl-tRNA(Gln) amidotransferase subunit A from Agathobacter rectalis (strain ATCC 33656 / DSM 3377 / JCM 17463 / KCTC 5835 / VPI 0990) (Eubacterium rectale).